A 214-amino-acid polypeptide reads, in one-letter code: U3 small nucleolar RNA-associated protein 16 (214 aa).

A compositionally biased stretch (basic and acidic residues) spans 1–10 (MSNGHVKFDA). The tract at residues 1–106 (MSNGHVKFDA…KSVNETEVTD (106 aa)) is disordered. Position 16 is a phosphoserine (S16). Residues 22–41 (DRQDDVLVISKKDKEVHSSS) show a composition bias toward basic and acidic residues. A compositionally biased stretch (acidic residues) spans 42 to 52 (DEESDDDDAPQ). Phosphoserine is present on residues S45, S65, and S144. Positions 54 to 75 (EGLHSGKSEVESQITQREEAIR) are enriched in basic and acidic residues. The disordered stretch occupies residues 182–214 (STTQDSKTLPPKKESSIIRSKDRWLNRKALNKG). Positions 192 to 206 (PKKESSIIRSKDRWL) are enriched in basic and acidic residues.

Belongs to the UTP16 family. In terms of assembly, part of the small subunit (SSU) processome composed of at least 40 protein subunits and the RNA chaperone small nucleolar RNA (snoRNA) U3. Interacts with snoRNA U3. Interacts with MPP10.

The protein localises to the nucleus. It is found in the nucleolus. Its function is as follows. Functions as part of the small subunit (SSU) processome, first precursor of the small eukaryotic ribosomal subunit that coordinates the first two steps of ribosome biogenesis in transcription of the primary transcript pre-RNA and pre-18S processing. During the assembly of the SSU processome in the nucleolus, many ribosome biogenesis factors, an RNA chaperone and ribosomal proteins associate with the nascent pre-rRNA and work in concert to generate RNA folding, modifications, rearrangements and cleavage as well as targeted degradation of pre-ribosomal RNA by the RNA exosome. Has a role in bud site selection maybe via the regulation of expression of bipolar budding components. This is U3 small nucleolar RNA-associated protein 16 (BUD21) from Saccharomyces cerevisiae (strain ATCC 204508 / S288c) (Baker's yeast).